The chain runs to 928 residues: DNA-binding protein RFX6 (928 aa).

Disordered regions lie at residues 1-22 (MAKVPVLEDAFLPAQPSPQVSP) and 53-102 (PGGA…AADL). Over residues 92–101 (SHDSKTKAAD) the composition is skewed to basic and acidic residues. Positions 124 to 199 (TLQWLEENYI…YHYYGIGIKE (76 aa)) form a DNA-binding region, RFX-type winged-helix.

The protein belongs to the RFX family. As to quaternary structure, interacts with RFX3.

Its subcellular location is the nucleus. Its function is as follows. Transcription factor required to direct islet cell differentiation during endocrine pancreas development. Specifically required for the differentiation of 4 of the 5 islet cell types and for the production of insulin. Not required for pancreatic PP (polypeptide-producing) cells differentiation. Acts downstream of NEUROG3 and regulates the transcription factors involved in beta-cell maturation and function, thereby restricting the expression of the beta-cell differentiation and specification genes, and thus the beta-cell fate choice. Activates transcription by forming a heterodimer with RFX3 and binding to the X-box in the promoter of target genes. Involved in glucose-stimulated insulin secretion by promoting insulin and L-type calcium channel gene transcription. The protein is DNA-binding protein RFX6 (RFX6) of Ailuropoda melanoleuca (Giant panda).